We begin with the raw amino-acid sequence, 507 residues long: Glycerol kinase (507 aa).

T15 provides a ligand contact to ADP. Residues T15, T16, and S17 each contribute to the ATP site. Residue T15 participates in sn-glycerol 3-phosphate binding. R19 provides a ligand contact to ADP. Positions 85, 86, 137, and 250 each coordinate sn-glycerol 3-phosphate. 5 residues coordinate glycerol: R85, E86, Y137, D250, and Q251. ADP contacts are provided by T272 and G316. 4 residues coordinate ATP: T272, G316, Q320, and G417. G417 lines the ADP pocket.

This sequence belongs to the FGGY kinase family.

The catalysed reaction is glycerol + ATP = sn-glycerol 3-phosphate + ADP + H(+). The protein operates within polyol metabolism; glycerol degradation via glycerol kinase pathway; sn-glycerol 3-phosphate from glycerol: step 1/1. Its activity is regulated as follows. Inhibited by fructose 1,6-bisphosphate (FBP). Key enzyme in the regulation of glycerol uptake and metabolism. Catalyzes the phosphorylation of glycerol to yield sn-glycerol 3-phosphate. The sequence is that of Glycerol kinase from Mycoplasmopsis pulmonis (strain UAB CTIP) (Mycoplasma pulmonis).